We begin with the raw amino-acid sequence, 297 residues long: 3-mercaptopyruvate sulfurtransferase (297 aa).

An N-acetylalanine modification is found at A2. In terms of domain architecture, Rhodanese 1 spans 25 to 144 (SSQPLKLLDA…WLNQNLPISS (120 aa)). The residue at position 35 (S35) is a Phosphoserine. N6-acetyllysine; alternate is present on K40. K40 is subject to N6-succinyllysine; alternate. The interval 145–160 (GKSHSEPAEFSAQLDP) is hinge. 2 positions are modified to N6-succinyllysine: K146 and K164. One can recognise a Rhodanese 2 domain in the interval 174 to 288 (DARRFQVVDA…WYMRAQPEHI (115 aa)). R188 provides a ligand contact to substrate. The active-site Cysteine persulfide intermediate is the C248.

In terms of assembly, monomer (active form). Homodimer; disulfide-linked (inactive form). Expressed in the brain and retina. In the retina, localized to the inner and outer plexiform layer, the inner and outer nuclear layer and the outer segments of photoreceptors. In the brain, localized to neurons of mitral cell layers, glomerular, and external plexiform layers in the olfactory bulb. Also found in Purkinje cell stomata and proximal dendrites. In the spinal cord, localized to large neurons. In the cerebral cortex, localized to pyramidial neurons in layers II/III and V, and in layers I-VI of neocortical areas. In the hippocampus, found in CA1 and CA3 pyramidal cells.

The protein localises to the cytoplasm. Its subcellular location is the mitochondrion. The protein resides in the synapse. It is found in the synaptosome. The enzyme catalyses 2-oxo-3-sulfanylpropanoate + [thioredoxin]-dithiol = [thioredoxin]-disulfide + hydrogen sulfide + pyruvate + H(+). Its activity is regulated as follows. By oxidative stress, and thioredoxin. Under oxidative stress conditions, the catalytic cysteine site is converted to a sulfenate which inhibits the MPST enzyme activity. Reduced thioredoxin cleaves an intersubunit disulfide bond to turn on the redox switch and reactivate the enzyme. Inhibited by different oxidants, hydrogen peroxide and tetrathionate. Its function is as follows. Transfer of a sulfur ion to cyanide or to other thiol compounds. Also has weak rhodanese activity. Detoxifies cyanide and is required for thiosulfate biosynthesis. Acts as an antioxidant. In combination with cysteine aminotransferase (CAT), contributes to the catabolism of cysteine and is an important producer of hydrogen sulfide in the brain, retina and vascular endothelial cells. Hydrogen sulfide H(2)S is an important synaptic modulator, signaling molecule, smooth muscle contractor and neuroprotectant. Its production by the 3MST/CAT pathway is regulated by calcium ions. The sequence is that of 3-mercaptopyruvate sulfurtransferase (Mpst) from Mus musculus (Mouse).